The chain runs to 542 residues: Chaperonin GroEL (542 aa).

Residues 29-32, Lys-50, 86-90, Gly-413, 477-479, and Asp-493 contribute to the ATP site; these read TLGP, DGTTT, and NAA.

The protein belongs to the chaperonin (HSP60) family. As to quaternary structure, forms a cylinder of 14 subunits composed of two heptameric rings stacked back-to-back. Interacts with the co-chaperonin GroES.

The protein localises to the cytoplasm. The enzyme catalyses ATP + H2O + a folded polypeptide = ADP + phosphate + an unfolded polypeptide.. In terms of biological role, together with its co-chaperonin GroES, plays an essential role in assisting protein folding. The GroEL-GroES system forms a nano-cage that allows encapsulation of the non-native substrate proteins and provides a physical environment optimized to promote and accelerate protein folding. The sequence is that of Chaperonin GroEL from Solibacter usitatus (strain Ellin6076).